A 292-amino-acid polypeptide reads, in one-letter code: 4-diphosphocytidyl-2-C-methyl-D-erythritol kinase (292 aa).

Residue Lys-20 is part of the active site. 103 to 113 contributes to the ATP binding site; it reads PMGGGIGGGSS. The active site involves Asp-145.

The protein belongs to the GHMP kinase family. IspE subfamily.

The enzyme catalyses 4-CDP-2-C-methyl-D-erythritol + ATP = 4-CDP-2-C-methyl-D-erythritol 2-phosphate + ADP + H(+). Its pathway is isoprenoid biosynthesis; isopentenyl diphosphate biosynthesis via DXP pathway; isopentenyl diphosphate from 1-deoxy-D-xylulose 5-phosphate: step 3/6. In terms of biological role, catalyzes the phosphorylation of the position 2 hydroxy group of 4-diphosphocytidyl-2C-methyl-D-erythritol. This is 4-diphosphocytidyl-2-C-methyl-D-erythritol kinase from Cupriavidus necator (strain ATCC 17699 / DSM 428 / KCTC 22496 / NCIMB 10442 / H16 / Stanier 337) (Ralstonia eutropha).